A 338-amino-acid chain; its full sequence is Glycerol-3-phosphate dehydrogenase [NAD(P)+] (338 aa).

The NADPH site is built by Ser15, Tyr16, His36, and Lys110. Residues Lys110, Gly139, and Thr141 each contribute to the sn-glycerol 3-phosphate site. Residue Ala143 coordinates NADPH. Sn-glycerol 3-phosphate contacts are provided by Lys195, Asp248, Ser258, Arg259, and Asn260. Lys195 acts as the Proton acceptor in catalysis. Arg259 is a binding site for NADPH. NADPH contacts are provided by Val283 and Glu285.

It belongs to the NAD-dependent glycerol-3-phosphate dehydrogenase family.

The protein localises to the cytoplasm. It carries out the reaction sn-glycerol 3-phosphate + NAD(+) = dihydroxyacetone phosphate + NADH + H(+). The enzyme catalyses sn-glycerol 3-phosphate + NADP(+) = dihydroxyacetone phosphate + NADPH + H(+). Its pathway is membrane lipid metabolism; glycerophospholipid metabolism. Functionally, catalyzes the reduction of the glycolytic intermediate dihydroxyacetone phosphate (DHAP) to sn-glycerol 3-phosphate (G3P), the key precursor for phospholipid synthesis. The chain is Glycerol-3-phosphate dehydrogenase [NAD(P)+] from Edwardsiella ictaluri (strain 93-146).